The sequence spans 755 residues: Polyribonucleotide nucleotidyltransferase (755 aa).

Residues Asp-493 and Asp-499 each coordinate Mg(2+). The region spanning 560–619 is the KH domain; it reads PRIMTIQIPVDKIGALIGPGGKTIRNICDTTGAQIDIEDDGRVFITAPDGEAAKKAISMI. The 70-residue stretch at 629 to 698 folds into the S1 motif domain; it reads GDIFLGKVVS…NTGKISLSRR (70 aa). The tract at residues 704 to 755 is disordered; the sequence is ETPEARKAAGAAPRPRPREEQRGGREEPRSLREELRGPRRDGERPRPRRRDD. Residues 719-755 show a composition bias toward basic and acidic residues; the sequence is RPREEQRGGREEPRSLREELRGPRRDGERPRPRRRDD.

The protein belongs to the polyribonucleotide nucleotidyltransferase family. The cofactor is Mg(2+).

It localises to the cytoplasm. It catalyses the reaction RNA(n+1) + phosphate = RNA(n) + a ribonucleoside 5'-diphosphate. Involved in mRNA degradation. Catalyzes the phosphorolysis of single-stranded polyribonucleotides processively in the 3'- to 5'-direction. This is Polyribonucleotide nucleotidyltransferase from Chloroflexus aggregans (strain MD-66 / DSM 9485).